Here is a 95-residue protein sequence, read N- to C-terminus: Large ribosomal subunit protein bL25 (95 aa).

This sequence belongs to the bacterial ribosomal protein bL25 family. In terms of assembly, part of the 50S ribosomal subunit; part of the 5S rRNA/L5/L18/L25 subcomplex. Contacts the 5S rRNA. Binds to the 5S rRNA independently of L5 and L18.

In terms of biological role, this is one of the proteins that binds to the 5S RNA in the ribosome where it forms part of the central protuberance. The protein is Large ribosomal subunit protein bL25 of Shewanella amazonensis (strain ATCC BAA-1098 / SB2B).